Consider the following 53-residue polypeptide: Snake venom serine protease LmrSP-4 (53 aa).

An intrachain disulfide couples Cys-26 to Cys-42. Residue His-41 is the Charge relay system of the active site.

As to quaternary structure, monomer. N-glycosylated. Expressed by the venom gland.

The protein localises to the secreted. Its activity is regulated as follows. Inhibited by the small molecule serine protease inhibitors phenylmethylsulfonyl fluoride (PMSF) and benzamidine. Snake venom serine protease that has fibrinogenolytic activity. Hydrolyzes the alpha-chain of fibrinogen (FGA), without affecting the beta- and the gamma-chains. Also displays hydrolytic activity towards S-2302 (plasma kallikrein substrate) and S-2251 (substrate for plasmin), but has no hydrolytic activity with S-2238 (thrombin substrate) or S-2222 (factor Xa). In Lachesis muta rhombeata (Bushmaster), this protein is Snake venom serine protease LmrSP-4.